A 143-amino-acid chain; its full sequence is Ribosome maturation factor RimP (143 aa).

It belongs to the RimP family.

It localises to the cytoplasm. Functionally, required for maturation of 30S ribosomal subunits. The polypeptide is Ribosome maturation factor RimP (Borrelia recurrentis (strain A1)).